We begin with the raw amino-acid sequence, 156 residues long: Phosphopantetheine adenylyltransferase (156 aa).

Thr10 is a binding site for substrate. ATP is bound by residues 10–11 (TF) and His18. The substrate site is built by Lys42, Leu74, and Arg88. ATP contacts are provided by residues 89–91 (GIR), Glu99, and 124–130 (WAFISSS).

This sequence belongs to the bacterial CoaD family. Homohexamer. Mg(2+) is required as a cofactor.

The protein localises to the cytoplasm. It carries out the reaction (R)-4'-phosphopantetheine + ATP + H(+) = 3'-dephospho-CoA + diphosphate. It functions in the pathway cofactor biosynthesis; coenzyme A biosynthesis; CoA from (R)-pantothenate: step 4/5. Functionally, reversibly transfers an adenylyl group from ATP to 4'-phosphopantetheine, yielding dephospho-CoA (dPCoA) and pyrophosphate. In Hamiltonella defensa subsp. Acyrthosiphon pisum (strain 5AT), this protein is Phosphopantetheine adenylyltransferase.